The sequence spans 162 residues: Interleukin-15 (162 aa).

The first 29 residues, 1–29, serve as a signal peptide directing secretion; the sequence is MRISKPHLRSVSIQCYLCLLLNSHFLTEA. Residues 30–48 constitute a propeptide that is removed on maturation; sequence GIHVFILGCFSAGLPKTEA. Disulfide bonds link C83–C133 and C90–C136. An N-linked (GlcNAc...) asparagine glycan is attached at N127.

It belongs to the IL-15/IL-21 family.

It localises to the secreted. Its function is as follows. Cytokine that plays a major role in the development of inflammatory and protective immune responses to microbial invaders and parasites by modulating immune cells of both the innate and adaptive immune systems. Stimulates the proliferation of natural killer cells, T-cells and B-cells and promotes the secretion of several cytokines. In monocytes, induces the production of IL8 and monocyte chemotactic protein 1/CCL2, two chemokines that attract neutrophils and monocytes respectively to sites of infection. Unlike most cytokines, which are secreted in soluble form, IL15 is expressed in association with its high affinity IL15RA on the surface of IL15-producing cells and delivers signals to target cells that express IL2RB and IL2RG receptor subunits. Binding to its receptor triggers the phosphorylation of JAK1 and JAK3 and the recruitment and subsequent phosphorylation of signal transducer and activator of transcription-3/STAT3 and STAT5. In mast cells, induces the rapid tyrosine phosphorylation of STAT6 and thereby controls mast cell survival and release of cytokines such as IL4. This chain is Interleukin-15 (IL15), found in Macaca mulatta (Rhesus macaque).